The primary structure comprises 170 residues: tRNA-splicing endonuclease (170 aa).

Active-site residues include Tyr110, His116, and Lys147.

This sequence belongs to the tRNA-intron endonuclease family. Archaeal short subfamily. In terms of assembly, homotetramer; although the tetramer contains four active sites, only two participate in the cleavage. Therefore, it should be considered as a dimer of dimers.

It catalyses the reaction pretRNA = a 3'-half-tRNA molecule with a 5'-OH end + a 5'-half-tRNA molecule with a 2',3'-cyclic phosphate end + an intron with a 2',3'-cyclic phosphate and a 5'-hydroxyl terminus.. Its function is as follows. Endonuclease that removes tRNA introns. Cleaves pre-tRNA at the 5'- and 3'-splice sites to release the intron. The products are an intron and two tRNA half-molecules bearing 2',3' cyclic phosphate and 5'-OH termini. Recognizes a pseudosymmetric substrate in which 2 bulged loops of 3 bases are separated by a stem of 4 bp. The protein is tRNA-splicing endonuclease of Pyrococcus horikoshii (strain ATCC 700860 / DSM 12428 / JCM 9974 / NBRC 100139 / OT-3).